We begin with the raw amino-acid sequence, 218 residues long: Host range factor 1 (218 aa).

In terms of biological role, facilitates AcMNPV replication in two non-permissive cell lines, IPLB-Ld652Y and IPLB-LdFB. This chain is Host range factor 1 (HRF-1), found in Lepidoptera (butterflies and moths).